A 44-amino-acid chain; its full sequence is Photosystem I reaction center subunit IX (44 aa).

A helical transmembrane segment spans residues 7 to 27 (YLSVAPVISTLWFGSLAGLLI).

It belongs to the PsaJ family.

The protein localises to the plastid. It localises to the chloroplast thylakoid membrane. Functionally, may help in the organization of the PsaE and PsaF subunits. In Populus alba (White poplar), this protein is Photosystem I reaction center subunit IX.